Consider the following 451-residue polypeptide: Trigger factor (451 aa).

The PPIase FKBP-type domain occupies 173-258 (GDRVTLDFVG…LKKIEWAHLP (86 aa)).

The protein belongs to the FKBP-type PPIase family. Tig subfamily.

Its subcellular location is the cytoplasm. It carries out the reaction [protein]-peptidylproline (omega=180) = [protein]-peptidylproline (omega=0). Involved in protein export. Acts as a chaperone by maintaining the newly synthesized protein in an open conformation. Functions as a peptidyl-prolyl cis-trans isomerase. The polypeptide is Trigger factor (Cupriavidus pinatubonensis (strain JMP 134 / LMG 1197) (Cupriavidus necator (strain JMP 134))).